A 699-amino-acid chain; its full sequence is Glycine--tRNA ligase beta subunit (699 aa).

The protein belongs to the class-II aminoacyl-tRNA synthetase family. Tetramer of two alpha and two beta subunits.

The protein localises to the cytoplasm. It catalyses the reaction tRNA(Gly) + glycine + ATP = glycyl-tRNA(Gly) + AMP + diphosphate. This is Glycine--tRNA ligase beta subunit from Methylobacterium radiotolerans (strain ATCC 27329 / DSM 1819 / JCM 2831 / NBRC 15690 / NCIMB 10815 / 0-1).